Here is a 913-residue protein sequence, read N- to C-terminus: Zinc finger protein 112 (913 aa).

One can recognise a KRAB domain in the interval 8-79; the sequence is VTFKDVAVVF…ETETPRDGCS (72 aa). Residue K256 forms a Glycyl lysine isopeptide (Lys-Gly) (interchain with G-Cter in SUMO2) linkage. The segment at 258-280 adopts a C2H2-type 1; degenerate zinc-finger fold; sequence YPCTGYRKAFSNDSSSEVHQQFH. Residues 443-465 form a C2H2-type 2; degenerate zinc finger; sequence YNSEECGNGFSLASHFQDLQIVH. The segment at 471 to 493 adopts a C2H2-type 3; degenerate zinc-finger fold; the sequence is YKRYVCSNSFSHNLYLQGHPKIH. The C2H2-type 4; degenerate zinc-finger motif lies at 497 to 519; it reads KPRKEHGNGFNWSSKLKDHQRVH. 13 C2H2-type zinc fingers span residues 525–547, 553–575, 581–603, 609–631, 637–659, 665–687, 693–715, 721–743, 749–771, 777–799, 805–827, 833–855, and 861–883; these read YKCN…QRVH, YKCE…QRVH, FKCE…QRVH, YQCD…QSVH, YICE…QRVH, YKCE…RRVH, YKCE…HRVH, and YKCD…QRVH. A Glycyl lysine isopeptide (Lys-Gly) (interchain with G-Cter in SUMO2) cross-link involves residue K890.

It belongs to the krueppel C2H2-type zinc-finger protein family.

The protein localises to the nucleus. Its function is as follows. May be involved in transcriptional regulation. In Homo sapiens (Human), this protein is Zinc finger protein 112 (ZNF112).